The primary structure comprises 197 residues: 3-isopropylmalate dehydratase small subunit (197 aa).

The protein belongs to the LeuD family. LeuD type 1 subfamily. As to quaternary structure, heterodimer of LeuC and LeuD.

The enzyme catalyses (2R,3S)-3-isopropylmalate = (2S)-2-isopropylmalate. It participates in amino-acid biosynthesis; L-leucine biosynthesis; L-leucine from 3-methyl-2-oxobutanoate: step 2/4. Functionally, catalyzes the isomerization between 2-isopropylmalate and 3-isopropylmalate, via the formation of 2-isopropylmaleate. The protein is 3-isopropylmalate dehydratase small subunit of Streptomyces avermitilis (strain ATCC 31267 / DSM 46492 / JCM 5070 / NBRC 14893 / NCIMB 12804 / NRRL 8165 / MA-4680).